The sequence spans 502 residues: ATP synthase subunit alpha (502 aa).

The interval 115–137 (VDGLGPVETTETRPIESPAPGVM) is disordered. Position 169-176 (169-176 (GDRQTGKT)) interacts with ATP.

Belongs to the ATPase alpha/beta chains family. F-type ATPases have 2 components, CF(1) - the catalytic core - and CF(0) - the membrane proton channel. CF(1) has five subunits: alpha(3), beta(3), gamma(1), delta(1), epsilon(1). CF(0) has three main subunits: a(1), b(2) and c(9-12). The alpha and beta chains form an alternating ring which encloses part of the gamma chain. CF(1) is attached to CF(0) by a central stalk formed by the gamma and epsilon chains, while a peripheral stalk is formed by the delta and b chains.

It localises to the cell membrane. The enzyme catalyses ATP + H2O + 4 H(+)(in) = ADP + phosphate + 5 H(+)(out). Its function is as follows. Produces ATP from ADP in the presence of a proton gradient across the membrane. The alpha chain is a regulatory subunit. The protein is ATP synthase subunit alpha of Geobacillus kaustophilus (strain HTA426).